Consider the following 253-residue polypeptide: Phosphate import ATP-binding protein PstB (253 aa).

Residues 7-248 (IKVRDLNLYY…PRDRRTEDYI (242 aa)) form the ABC transporter domain. Position 39 to 46 (39 to 46 (GPSGCGKS)) interacts with ATP.

Belongs to the ABC transporter superfamily. Phosphate importer (TC 3.A.1.7) family. The complex is composed of two ATP-binding proteins (PstB), two transmembrane proteins (PstC and PstA) and a solute-binding protein (PstS).

Its subcellular location is the cell membrane. The enzyme catalyses phosphate(out) + ATP + H2O = ADP + 2 phosphate(in) + H(+). In terms of biological role, part of the ABC transporter complex PstSACB involved in phosphate import. Responsible for energy coupling to the transport system. This Carboxydothermus hydrogenoformans (strain ATCC BAA-161 / DSM 6008 / Z-2901) protein is Phosphate import ATP-binding protein PstB.